Reading from the N-terminus, the 220-residue chain is Ras-related protein Rab-3 (220 aa).

14 residues coordinate GTP: S30, G33, K34, T35, S36, T47, S48, S52, T53, G79, N134, D137, A165, and K166. Residue T35 participates in Mg(2+) binding. Residues 50-58 (FVSTVGIDF) carry the Effector region motif. Position 53 (T53) interacts with Mg(2+). The interval 194–220 (PTLVGGGQKGQRLTDQPQGTPNANCNC) is disordered. The segment covering 204-220 (QRLTDQPQGTPNANCNC) has biased composition (polar residues). 2 S-geranylgeranyl cysteine lipidation sites follow: C218 and C220. The residue at position 220 (C220) is a Cysteine methyl ester.

The protein belongs to the small GTPase superfamily. Rab family. As to quaternary structure, interacts with Rph.

Its subcellular location is the cytoplasmic vesicle. The protein localises to the secretory vesicle. It localises to the synaptic vesicle. Its function is as follows. Involved in exocytosis by regulating a late step in synaptic vesicle fusion. Could play a role in neurotransmitter release by regulating membrane flow in the nerve terminal. The protein is Ras-related protein Rab-3 (Rab3) of Drosophila melanogaster (Fruit fly).